A 362-amino-acid chain; its full sequence is RNA-binding protein 4 (362 aa).

RRM domains lie at 2 to 72 (VKLF…ASKN) and 78 to 148 (TKLH…LSTS). Lys79 participates in a covalent cross-link: Glycyl lysine isopeptide (Lys-Gly) (interchain with G-Cter in SUMO2). Ser86 is modified (phosphoserine). A Glycyl lysine isopeptide (Lys-Gly) (interchain with G-Cter in SUMO2) cross-link involves residue Lys92. Residues 160–177 (SGCYRCGKEGHWSKECPV) form a CCHC-type zinc finger. The interaction with TNPO3 stretch occupies residues 196 to 362 (AVRTPYTMGY…YADRARYSAF (167 aa)). The tract at residues 306 to 336 (RSPLRRATGPVPTVGEGYGYGHESELSQGSS) is disordered. Ser307 carries the post-translational modification Phosphoserine.

As to quaternary structure, interacts with TNPO3; the interaction mediates nuclear import of the protein and is disrupted by nuclear Ran bound to GTP. Interacts with EIF4G1 and WT1. Interacts with EIF4A1; the interaction is modulated under stress-induced conditions. Interacts with AGO1. Interacts with AGO2; the interaction occurs under both cell proliferation and differentiation conditions and in an RNA- and phosphorylation-independent manner. Interacts with DDX5; the interaction occurs in an RNA-independent manner. Interacts with RBPMS; the interaction allows cooperative assembly of RNA-bound stable cell-specific alternative splicing regulatory complexes. Phosphorylated. Phosphorylated in vitro on Ser-307 by SRPK1. Phosphorylation on Ser-307 is induced upon cell stress signaling, which alters its subcellular localization and may modulate its activity on IRES-mediated mRNA translation. Phosphorylation on Ser-307 is induced upon cell muscle differentiation.

The protein localises to the nucleus. It localises to the nucleolus. Its subcellular location is the nucleus speckle. The protein resides in the cytoplasm. It is found in the cytoplasmic granule. RNA-binding factor involved in multiple aspects of cellular processes like alternative splicing of pre-mRNA and translation regulation. Modulates alternative 5'-splice site and exon selection. Acts as a muscle cell differentiation-promoting factor. Activates exon skipping of the PTB pre-mRNA during muscle cell differentiation. Antagonizes the activity of the splicing factor PTBP1 to modulate muscle cell-specific exon selection of alpha tropomyosin. Binds to intronic pyrimidine-rich sequence of the TPM1 and MAPT pre-mRNAs. Required for the translational activation of PER1 mRNA in response to circadian clock. Binds directly to the 3'-UTR of the PER1 mRNA. Exerts a suppressive activity on Cap-dependent translation via binding to CU-rich responsive elements within the 3'UTR of mRNAs, a process increased under stress conditions or during myocytes differentiation. Recruits EIF4A1 to stimulate IRES-dependent translation initiation in respons to cellular stress. Associates to internal ribosome entry segment (IRES) in target mRNA species under stress conditions. Plays a role for miRNA-guided RNA cleavage and translation suppression by promoting association of AGO2-containing miRNPs with their cognate target mRNAs. Associates with miRNAs during muscle cell differentiation. Binds preferentially to 5'-CGCGCG[GCA]-3' motif in vitro. This is RNA-binding protein 4 (RBM4) from Bos taurus (Bovine).